We begin with the raw amino-acid sequence, 61 residues long: uncharacterized protein (61 aa).

The stretch at 10–61 forms a coiled coil; it reads YEEENDNEDFEEEVELSREDLNQIINELAPFLIKLLTDLTELTQKKEESENE.

This is an uncharacterized protein from Acidianus bottle-shaped virus (isolate Italy/Pozzuoli) (ABV).